The primary structure comprises 427 residues: Ectoine TRAP transporter large permease protein TeaC (427 aa).

12 consecutive transmembrane segments (helical) span residues 13-35, 49-69, 79-99, 103-123, 147-167, 172-192, 216-236, 237-257, 273-293, 320-340, 356-376, and 400-420; these read LLLG…FMMF, MAGI…AADI, LINM…VSTA, TLFG…GSPL, IAFL…SGTS, FIAG…YCVI, LALW…GGIF, SPTE…FVVF, GLIT…SWII, ICVA…ILVL, VLVG…PPFG, and FIFM…IALF.

This sequence belongs to the TRAP transporter large permease family. As to quaternary structure, the complex comprises the extracytoplasmic solute receptor protein TeaA, and the two transmembrane proteins TeaB and TeaC.

The protein resides in the cell inner membrane. Part of the tripartite ATP-independent periplasmic (TRAP) transport system TeaABC involved in the uptake of ectoine and hydroxyectoine in response to osmotic upshock. Probably functions as a recovery system for synthesized ectoine that leaks out of the cell. This Halomonas elongata (strain ATCC 33173 / DSM 2581 / NBRC 15536 / NCIMB 2198 / 1H9) protein is Ectoine TRAP transporter large permease protein TeaC (teaC).